A 408-amino-acid chain; its full sequence is Putative UPF0496 protein 2 (408 aa).

Helical transmembrane passes span 224 to 244 and 252 to 272; these read RIAR…AIVA and ALVG…GAAR. The tract at residues 385-408 is disordered; the sequence is MARGLPPPSPATVTTTSEERLTSS.

This sequence belongs to the UPF0496 family.

It is found in the membrane. The chain is Putative UPF0496 protein 2 from Oryza sativa subsp. japonica (Rice).